Consider the following 1155-residue polypeptide: Alpha,alpha-trehalose-phosphate synthase [UDP-forming] 1 (1155 aa).

Residues 56 to 94 (LQRRRSVSSRGGSLRGSMDSLNDSGQNGAEDVIGVEDEE) are disordered. Low complexity predominate over residues 63–72 (SSRGGSLRGS).

It in the N-terminal section; belongs to the glycosyltransferase 20 family. The protein in the C-terminal section; belongs to the gob-1 trehalose phosphatase family.

It carries out the reaction D-glucose 6-phosphate + UDP-alpha-D-glucose = alpha,alpha-trehalose 6-phosphate + UDP + H(+). In terms of biological role, catalyzes the production of trehalose from glucose-6-phosphate and UDP-alpha-D-glucose in a 2 step process. In Aphelenchoides avenae (Mycophagous nematode worm), this protein is Alpha,alpha-trehalose-phosphate synthase [UDP-forming] 1 (tps-1).